The chain runs to 156 residues: Ribosome-binding factor A (156 aa).

Positions 129 to 156 (AGEAQPYRVEEEPGDSEDETPPSSQDQR) are disordered.

Belongs to the RbfA family. Monomer. Binds 30S ribosomal subunits, but not 50S ribosomal subunits or 70S ribosomes.

It is found in the cytoplasm. Functionally, one of several proteins that assist in the late maturation steps of the functional core of the 30S ribosomal subunit. Associates with free 30S ribosomal subunits (but not with 30S subunits that are part of 70S ribosomes or polysomes). Required for efficient processing of 16S rRNA. May interact with the 5'-terminal helix region of 16S rRNA. This is Ribosome-binding factor A from Salinispora arenicola (strain CNS-205).